Reading from the N-terminus, the 256-residue chain is MTYLTRILETKAREVAELKKLKPERRYREACGDLPATRDFRSAITSRDGGINLIAEVKKASPSRGVLVEDFRPLDIAARYAELGASAFSVLTDSHYFQGSPDYLKAITQQFSIPVLRKEFIIDESQIYETRLMGADAALLIVAALEPSQLRDYLQLFAELGLHALVEVHDRRELDIAIEQGSTIVGVNNRDLRDFTVDLMTSVNLKREYPEGVLSVAESGLKRRDDVLLMQDAGFDAVLIGEGLLASEELRQFSWG.

The protein belongs to the TrpC family.

The catalysed reaction is 1-(2-carboxyphenylamino)-1-deoxy-D-ribulose 5-phosphate + H(+) = (1S,2R)-1-C-(indol-3-yl)glycerol 3-phosphate + CO2 + H2O. It participates in amino-acid biosynthesis; L-tryptophan biosynthesis; L-tryptophan from chorismate: step 4/5. This chain is Indole-3-glycerol phosphate synthase, found in Chlorobaculum tepidum (strain ATCC 49652 / DSM 12025 / NBRC 103806 / TLS) (Chlorobium tepidum).